The sequence spans 66 residues: Large ribosomal subunit protein bL35 (66 aa).

Residues 1–16 are compositionally biased toward basic residues; the sequence is MPKQKTHRASAKRFKR. The disordered stretch occupies residues 1 to 20; sequence MPKQKTHRASAKRFKRTGSG.

The protein belongs to the bacterial ribosomal protein bL35 family.

The protein is Large ribosomal subunit protein bL35 of Streptococcus thermophilus (strain CNRZ 1066).